Reading from the N-terminus, the 174-residue chain is Large ribosomal subunit protein uL18 (174 aa).

The protein belongs to the universal ribosomal protein uL18 family. As to quaternary structure, part of the 50S ribosomal subunit. Contacts the 5S and 23S rRNAs.

Functionally, this is one of the proteins that bind and probably mediate the attachment of the 5S RNA into the large ribosomal subunit, where it forms part of the central protuberance. In Methanocorpusculum labreanum (strain ATCC 43576 / DSM 4855 / Z), this protein is Large ribosomal subunit protein uL18.